A 57-amino-acid chain; its full sequence is UPF0391 membrane protein Nham_2738 (57 aa).

2 consecutive transmembrane segments (helical) span residues 4–24 and 30–50; these read WVVT…GGLA and IAKI…VVGL.

This sequence belongs to the UPF0391 family.

Its subcellular location is the cell membrane. This is UPF0391 membrane protein Nham_2738 from Nitrobacter hamburgensis (strain DSM 10229 / NCIMB 13809 / X14).